The following is a 148-amino-acid chain: Endoribonuclease YbeY (148 aa).

The Zn(2+) site is built by His105, His109, and Asp115.

The protein belongs to the endoribonuclease YbeY family. Zn(2+) is required as a cofactor.

The protein localises to the cytoplasm. In terms of biological role, single strand-specific metallo-endoribonuclease involved in late-stage 70S ribosome quality control and in maturation of the 3' terminus of the 16S rRNA. The protein is Endoribonuclease YbeY of Chlorobium phaeovibrioides (strain DSM 265 / 1930) (Prosthecochloris vibrioformis (strain DSM 265)).